The chain runs to 174 residues: Ribosome maturation factor RimM (174 aa).

A PRC barrel domain is found at 97–169; that stretch reads GNKFYFHEVI…KVVMDLPEGL (73 aa).

Belongs to the RimM family. Binds ribosomal protein uS19.

The protein resides in the cytoplasm. In terms of biological role, an accessory protein needed during the final step in the assembly of 30S ribosomal subunit, possibly for assembly of the head region. Essential for efficient processing of 16S rRNA. May be needed both before and after RbfA during the maturation of 16S rRNA. It has affinity for free ribosomal 30S subunits but not for 70S ribosomes. The protein is Ribosome maturation factor RimM of Flavobacterium psychrophilum (strain ATCC 49511 / DSM 21280 / CIP 103535 / JIP02/86).